Here is a 281-residue protein sequence, read N- to C-terminus: Sulfur carrier protein FdhD (281 aa).

The Cysteine persulfide intermediate role is filled by cysteine 117.

This sequence belongs to the FdhD family.

Its subcellular location is the cytoplasm. Required for formate dehydrogenase (FDH) activity. Acts as a sulfur carrier protein that transfers sulfur from IscS to the molybdenum cofactor prior to its insertion into FDH. This Xanthomonas euvesicatoria pv. vesicatoria (strain 85-10) (Xanthomonas campestris pv. vesicatoria) protein is Sulfur carrier protein FdhD.